The sequence spans 257 residues: MVSWMICRLVVLIFGMLYPAYASYKAVKSKNIREYVRWMMYWIVFAIFMAAETFTDIFISWFPFYYEFKMAFVLWLLSPYTKGASLLYRKFVHPSLSRHEKEIDACIVQAKERSYETMLSFGKRSLNIAASAAVQAATKSQGALAGRLRSFSMQDLRSIPDTPVPTYQDPLYLEDQVPRRRPPIGYRPGGLQGSDTEDECWSDNEIVPQPPVRPREKPLGRSQSLRVVKRKPLTREGTSRSLKVRTRKKAMPSDMDS.

Helical transmembrane passes span 1–21 and 42–62; these read MVSW…YPAY and WIVF…ISWF. Phosphoserine occurs at positions 152 and 194. Residues 177-257 are disordered; sequence VPRRRPPIGY…KKAMPSDMDS (81 aa). Threonine 196 is subject to Phosphothreonine. A phosphoserine mark is found at serine 202 and serine 253.

Belongs to the DP1 family.

The protein localises to the endoplasmic reticulum membrane. In terms of biological role, microtubule-binding protein required to ensure proper cell division and nuclear envelope reassembly by sequestering the endoplasmic reticulum away from chromosomes during mitosis. Probably acts by clearing the endoplasmic reticulum membrane from metaphase chromosomes. This Mus musculus (Mouse) protein is Receptor expression-enhancing protein 4 (Reep4).